The primary structure comprises 162 residues: Phosphopantetheine adenylyltransferase (162 aa).

A substrate-binding site is contributed by threonine 10. Residues 10 to 11 (TF) and histidine 18 each bind ATP. Residues lysine 42, leucine 74, and arginine 88 each contribute to the substrate site. ATP contacts are provided by residues 89 to 91 (GLR), glutamate 99, and 124 to 130 (FSCISST).

This sequence belongs to the bacterial CoaD family. As to quaternary structure, homohexamer. It depends on Mg(2+) as a cofactor.

Its subcellular location is the cytoplasm. It carries out the reaction (R)-4'-phosphopantetheine + ATP + H(+) = 3'-dephospho-CoA + diphosphate. Its pathway is cofactor biosynthesis; coenzyme A biosynthesis; CoA from (R)-pantothenate: step 4/5. Its function is as follows. Reversibly transfers an adenylyl group from ATP to 4'-phosphopantetheine, yielding dephospho-CoA (dPCoA) and pyrophosphate. In Francisella tularensis subsp. mediasiatica (strain FSC147), this protein is Phosphopantetheine adenylyltransferase.